The sequence spans 185 residues: Putative F-box protein At3g17400 (185 aa).

Positions 1-47 (MMTLSDLPSDLAEEVLSKIPVTSLRGVRATCKKWNTLSKDRSFTRKH) constitute an F-box domain.

The protein is Putative F-box protein At3g17400 of Arabidopsis thaliana (Mouse-ear cress).